A 135-amino-acid polypeptide reads, in one-letter code: Nucleoside diphosphate kinase (135 aa).

ATP is bound by residues K9, Y57, R85, T91, R102, and N112. H115 (pros-phosphohistidine intermediate) is an active-site residue.

This sequence belongs to the NDK family. As to quaternary structure, homotetramer. Mg(2+) serves as cofactor.

The protein resides in the cytoplasm. It catalyses the reaction a 2'-deoxyribonucleoside 5'-diphosphate + ATP = a 2'-deoxyribonucleoside 5'-triphosphate + ADP. It carries out the reaction a ribonucleoside 5'-diphosphate + ATP = a ribonucleoside 5'-triphosphate + ADP. Functionally, major role in the synthesis of nucleoside triphosphates other than ATP. The ATP gamma phosphate is transferred to the NDP beta phosphate via a ping-pong mechanism, using a phosphorylated active-site intermediate. The polypeptide is Nucleoside diphosphate kinase (Thermoanaerobacter pseudethanolicus (strain ATCC 33223 / 39E) (Clostridium thermohydrosulfuricum)).